The following is a 244-amino-acid chain: uncharacterized protein (244 aa).

A signal peptide spans 1–17 (MVLHVITALLSIGLCYG).

As to expression, component of the acid-soluble and acid-insoluble organic matrix of prismatic shell layers (at protein level).

Its subcellular location is the secreted. This is an uncharacterized protein from Haliotis asinina (Donkey's ear abalone).